Here is a 155-residue protein sequence, read N- to C-terminus: Riboflavin synthase (155 aa).

Belongs to the DMRL synthase family.

It carries out the reaction 2 6,7-dimethyl-8-(1-D-ribityl)lumazine + H(+) = 5-amino-6-(D-ribitylamino)uracil + riboflavin. The protein operates within cofactor biosynthesis; riboflavin biosynthesis; riboflavin from 2-hydroxy-3-oxobutyl phosphate and 5-amino-6-(D-ribitylamino)uracil: step 2/2. This Aeropyrum pernix (strain ATCC 700893 / DSM 11879 / JCM 9820 / NBRC 100138 / K1) protein is Riboflavin synthase (ribC).